Reading from the N-terminus, the 260-residue chain is Mitochondrial import inner membrane translocase subunit Tim29 (260 aa).

The transit peptide at 1–31 (MAAAALRRFWSRRRAEAGDAVVAKPGVWARL) directs the protein to the mitochondrion. The Mitochondrial matrix portion of the chain corresponds to 32–59 (GSWARALLRDYAEACRDASAEARARPGR). The chain crosses the membrane as a helical span at residues 60 to 77 (AAVYVGLLGGAAACFTLA). The Mitochondrial intermembrane portion of the chain corresponds to 78–260 (PSEGAFEEAL…HSLVQAEAPR (183 aa)).

In terms of assembly, component of the TIM22 complex, which core is composed of TIMM22, associated with TIMM10 (TIMM10A and/or TIMM10B), TIMM9, AGK and TIMM29. Interacts with TIMM10B; the interaction is direct. Interacts with TOMM40; linking the TIM22 complex to the TOM complex. Interacts with TIMM22 (when oxidized); the interaction is direct.

The protein resides in the mitochondrion inner membrane. In terms of biological role, component of the TIM22 complex, a complex that mediates the import and insertion of multi-pass transmembrane proteins into the mitochondrial inner membrane. The TIM22 complex forms a twin-pore translocase that uses the membrane potential as the external driving force. Required for the stability of the TIM22 complex and functions in the assembly of the TIMM22 protein into the TIM22 complex. May facilitate cooperation between TIM22 and TOM complexes by interacting with TOMM40. The chain is Mitochondrial import inner membrane translocase subunit Tim29 from Homo sapiens (Human).